A 301-amino-acid chain; its full sequence is GTPase Era (301 aa).

The region spanning 7–175 (YCGFIAIVGR…AGIVRKHLPE (169 aa)) is the Era-type G domain. The tract at residues 15–22 (GRPNVGKS) is G1. 15–22 (GRPNVGKS) is a GTP binding site. The tract at residues 41 to 45 (QTTRH) is G2. The G3 stretch occupies residues 62–65 (DTPG). GTP contacts are provided by residues 62–66 (DTPGL) and 124–127 (NKVD). A G4 region spans residues 124–127 (NKVD). The tract at residues 154 to 156 (ISA) is G5. Positions 206-283 (LGAELPYSVT…HLELWVKVKS (78 aa)) constitute a KH type-2 domain.

Belongs to the TRAFAC class TrmE-Era-EngA-EngB-Septin-like GTPase superfamily. Era GTPase family. Monomer.

Its subcellular location is the cytoplasm. It localises to the cell inner membrane. In terms of biological role, an essential GTPase that binds both GDP and GTP, with rapid nucleotide exchange. Plays a role in 16S rRNA processing and 30S ribosomal subunit biogenesis and possibly also in cell cycle regulation and energy metabolism. This chain is GTPase Era, found in Salmonella heidelberg (strain SL476).